Consider the following 634-residue polypeptide: Extracellular metalloproteinase MEP (634 aa).

The signal sequence occupies residues 1-18; sequence MRGLLLAGALALPASVFA. Residues 19–245 constitute a propeptide that is removed on maturation; that stretch reads HPAHQSYGLN…IHGVVDYVAE (227 aa). Residue histidine 429 participates in Zn(2+) binding. Glutamate 430 is an active-site residue. Zn(2+) is bound at residue histidine 433.

Belongs to the peptidase M36 family. The cofactor is Zn(2+).

Its subcellular location is the secreted. In terms of biological role, secreted metalloproteinase that allows assimilation of proteinaceous substrates and probably acts as a virulence factor. The protein is Extracellular metalloproteinase MEP (MEP) of Neosartorya fischeri (strain ATCC 1020 / DSM 3700 / CBS 544.65 / FGSC A1164 / JCM 1740 / NRRL 181 / WB 181) (Aspergillus fischerianus).